Here is a 206-residue protein sequence, read N- to C-terminus: Phosphoheptose isomerase (206 aa).

The SIS domain occupies 37 to 195; that stretch reads LVDAFKAGKK…IEQKMDINNE (159 aa). Position 52–54 (52–54) interacts with substrate; sequence NGG. The Zn(2+) site is built by histidine 61 and glutamate 65. Substrate contacts are provided by residues glutamate 65, 93–94, 119–121, serine 124, and glutamine 172; these read ND and STS. Residues glutamine 172 and histidine 180 each coordinate Zn(2+).

This sequence belongs to the SIS family. GmhA subfamily. As to quaternary structure, homotetramer. The cofactor is Zn(2+).

Its subcellular location is the cytoplasm. It catalyses the reaction 2 D-sedoheptulose 7-phosphate = D-glycero-alpha-D-manno-heptose 7-phosphate + D-glycero-beta-D-manno-heptose 7-phosphate. Its pathway is carbohydrate biosynthesis; D-glycero-D-manno-heptose 7-phosphate biosynthesis; D-glycero-alpha-D-manno-heptose 7-phosphate and D-glycero-beta-D-manno-heptose 7-phosphate from sedoheptulose 7-phosphate: step 1/1. In terms of biological role, catalyzes the isomerization of sedoheptulose 7-phosphate in D-glycero-D-manno-heptose 7-phosphate. The sequence is that of Phosphoheptose isomerase from Hamiltonella defensa subsp. Acyrthosiphon pisum (strain 5AT).